Reading from the N-terminus, the 457-residue chain is tRNA modification GTPase MnmE (457 aa).

Residues Arg23, Glu85, and Arg124 each contribute to the (6S)-5-formyl-5,6,7,8-tetrahydrofolate site. Positions 220–376 (GALVVLAGQV…LVTAIRAAVL (157 aa)) constitute a TrmE-type G domain. A K(+)-binding site is contributed by Asn230. GTP is bound by residues 230–235 (NAGKSS), 249–255 (TDLPGTT), and 274–277 (DTAG). Ser234 provides a ligand contact to Mg(2+). Residues Thr249, Leu251, and Thr254 each coordinate K(+). Thr255 is a Mg(2+) binding site. Lys457 lines the (6S)-5-formyl-5,6,7,8-tetrahydrofolate pocket.

It belongs to the TRAFAC class TrmE-Era-EngA-EngB-Septin-like GTPase superfamily. TrmE GTPase family. Homodimer. Heterotetramer of two MnmE and two MnmG subunits. Requires K(+) as cofactor.

It is found in the cytoplasm. In terms of biological role, exhibits a very high intrinsic GTPase hydrolysis rate. Involved in the addition of a carboxymethylaminomethyl (cmnm) group at the wobble position (U34) of certain tRNAs, forming tRNA-cmnm(5)s(2)U34. This chain is tRNA modification GTPase MnmE, found in Nitratidesulfovibrio vulgaris (strain ATCC 29579 / DSM 644 / CCUG 34227 / NCIMB 8303 / VKM B-1760 / Hildenborough) (Desulfovibrio vulgaris).